The primary structure comprises 438 residues: Death-associated inhibitor of apoptosis 1 (438 aa).

Residues 44 to 110 form a BIR 1 repeat; it reads EETRLKTFTD…QRWSPNCPLL (67 aa). Positions 194-213 are disordered; that stretch reads TATQATGDVQPETCRPSAAS. Residues 226-293 form a BIR 2 repeat; the sequence is ETARLRTFEA…ALWLSQCRFV (68 aa). Zn(2+) is bound by residues C263, C266, H283, and C290. Residues 322–346 are disordered; that stretch reads GGVAVASTQASEEEQQTSLSSEEAV. Positions 327 to 345 are enriched in low complexity; sequence ASTQASEEEQQTSLSSEEA. An RING-type zinc finger spans residues 391–426; that stretch reads CKICYGAEYNTAFLPCGHVVACAKCASSVTKCPLCR.

Belongs to the IAP family. Interacts (via BIR 2 domain) with Dronc (via residues 114-125). Rpr, hid and grim can outcompete Dronc for binding Diap1 therefore removing Diap1-mediated ubiquitination. Interacts (via BIR 2 domain) with HtrA2; this displaces any bound Dronc. Interacts with Strica. The N-terminally cleaved form interacts with Ubr3 (via UBR-type zinc finger); the interaction promotes the recruitment and uniquitination of substrate capases such as Dronc. Post-translationally, ubiquitinated and degraded by HtrA2 in apoptotic cells; proteolytic cleavage at specific sites in the BIR domain linker region generating inactive fragments. Mutation of one site reduces but does not abolish cleavage as another site is selected by the protease.

The catalysed reaction is S-ubiquitinyl-[E2 ubiquitin-conjugating enzyme]-L-cysteine + [acceptor protein]-L-lysine = [E2 ubiquitin-conjugating enzyme]-L-cysteine + N(6)-ubiquitinyl-[acceptor protein]-L-lysine.. In terms of biological role, anti-apoptotic protein which functions as a caspase regulator, using its E3 ubiquitin-protein ligase activity to smother caspase activity. Binds, ubiquitinates and inactivates initiator caspase Dronc, and effector caspases Drice and Dcp-1. Acts as a Nedd8-E3 ubiquitin-protein ligase for Drice. Suppresses apoptosis by targeting the apoptosome for ubiquitination and inactivation. Plays an important role in cell motility. Overexpression suppresses rpr and hid-dependent cell death in the eye. Interaction of Diap1 with Dronc is required to suppress Dronc-mediated cell death through Diap1-mediated ubiquitination of Dronc. Acts as a positive regulator of Wnt signaling. The sequence is that of Death-associated inhibitor of apoptosis 1 (Diap1) from Drosophila melanogaster (Fruit fly).